The sequence spans 65 residues: Large ribosomal subunit protein bL35 (65 aa).

A disordered region spans residues 1–26 (MPKMKTHRGAAKRFKKTGSGKLKRAK).

Belongs to the bacterial ribosomal protein bL35 family.

The polypeptide is Large ribosomal subunit protein bL35 (Clostridium novyi (strain NT)).